The chain runs to 143 residues: FAD synthase (143 aa).

Residues 11 to 12, 16 to 19, and Asp94 each bind ATP; these read TF and HPGH.

The protein belongs to the archaeal FAD synthase family. Homodimer. Requires a divalent metal cation as cofactor.

The enzyme catalyses FMN + ATP + H(+) = FAD + diphosphate. Its pathway is cofactor biosynthesis; FAD biosynthesis; FAD from FMN: step 1/1. In terms of biological role, catalyzes the transfer of the AMP portion of ATP to flavin mononucleotide (FMN) to produce flavin adenine dinucleotide (FAD) coenzyme. In Halomicrobium mukohataei (strain ATCC 700874 / DSM 12286 / JCM 9738 / NCIMB 13541) (Haloarcula mukohataei), this protein is FAD synthase.